The chain runs to 233 residues: MADS-box transcription factor 56 (233 aa).

Residues 1–61 form the MADS-box domain; that stretch reads MVRGRTELKR…GRLYEFASAP (61 aa). In terms of domain architecture, K-box spans 87 to 177; that stretch reads IQQVKDDTLG…RGKHRNLEAA (91 aa).

It is found in the nucleus. Functionally, probable transcription factor. This chain is MADS-box transcription factor 56 (MADS56), found in Oryza sativa subsp. indica (Rice).